A 141-amino-acid chain; its full sequence is uncharacterized protein (141 aa).

This is an uncharacterized protein from Sinorhizobium fredii (strain NBRC 101917 / NGR234).